A 430-amino-acid chain; its full sequence is Transcription factor iws-1 (430 aa).

Over residues 1–14 (MSDAASPAGSPAAE) the composition is skewed to low complexity. A disordered region spans residues 1–153 (MSDAASPAGS…EENLTPDERR (153 aa)). Positions 15–33 (PTEHRDEDQVNETHQDDGS) are enriched in basic and acidic residues. The span at 52-63 (VLSEIDENEFGD) shows a compositional bias: acidic residues. Residues 95-104 (KEGRRPKKRS) are compositionally biased toward basic residues. A compositionally biased stretch (basic and acidic residues) spans 124-137 (VRAEGERRARKEVE). The TFIIS N-terminal domain maps to 244–321 (QSVRYFLEPL…GEWSRLILKR (78 aa)). The interval 402–430 (GQAPTDHRPIGHSGHEAFRRMTQKGKGKR) is disordered. Residues 406–420 (TDHRPIGHSGHEAFR) are compositionally biased toward basic and acidic residues.

Belongs to the IWS1 family.

It is found in the nucleus. In terms of biological role, transcription factor involved in RNA polymerase II transcription regulation. May function in both SPT15/TBP post-recruitment and recruitment steps of transcription. The protein is Transcription factor iws-1 (iws-1) of Neurospora crassa (strain ATCC 24698 / 74-OR23-1A / CBS 708.71 / DSM 1257 / FGSC 987).